The sequence spans 26 residues: Hainantoxin F1-31.97 (26 aa).

Intrachain disulfides connect Cys-2–Cys-16 and Cys-9–Cys-21.

It belongs to the neurotoxin 10 (Hwtx-1) family. 17 (Hntx-9) subfamily. Expressed by the venom gland.

Its subcellular location is the secreted. Functionally, ion channel inhibitor. In Cyriopagopus hainanus (Chinese bird spider), this protein is Hainantoxin F1-31.97.